Consider the following 122-residue polypeptide: Large ribosomal subunit protein uL14 (122 aa).

The protein belongs to the universal ribosomal protein uL14 family. In terms of assembly, part of the 50S ribosomal subunit. Forms a cluster with proteins L3 and L19. In the 70S ribosome, L14 and L19 interact and together make contacts with the 16S rRNA in bridges B5 and B8.

In terms of biological role, binds to 23S rRNA. Forms part of two intersubunit bridges in the 70S ribosome. The sequence is that of Large ribosomal subunit protein uL14 from Bartonella quintana (strain Toulouse) (Rochalimaea quintana).